The following is a 211-amino-acid chain: 2,3-bisphosphoglycerate-dependent phosphoglycerate mutase (211 aa).

Substrate-binding positions include 9-16 (RHGQSEWN), 22-23 (TG), R61, 88-91 (ERDY), K99, 115-116 (RR), and 159-160 (GN). Residue H10 is the Tele-phosphohistidine intermediate of the active site. E88 serves as the catalytic Proton donor/acceptor.

This sequence belongs to the phosphoglycerate mutase family. BPG-dependent PGAM subfamily. In terms of assembly, homodimer.

It catalyses the reaction (2R)-2-phosphoglycerate = (2R)-3-phosphoglycerate. It functions in the pathway carbohydrate degradation; glycolysis; pyruvate from D-glyceraldehyde 3-phosphate: step 3/5. Functionally, catalyzes the interconversion of 2-phosphoglycerate and 3-phosphoglycerate. The chain is 2,3-bisphosphoglycerate-dependent phosphoglycerate mutase from Sinorhizobium fredii (strain NBRC 101917 / NGR234).